The primary structure comprises 99 residues: Plastocyanin (99 aa).

The Plastocyanin-like domain maps to 1 to 99 (IEVLLGGGDG…AGMVGKVTVN (99 aa)). 4 residues coordinate Cu cation: histidine 37, cysteine 84, histidine 87, and methionine 92.

It belongs to the plastocyanin family. It depends on Cu(2+) as a cofactor.

The protein resides in the plastid. It is found in the chloroplast thylakoid membrane. Functionally, participates in electron transfer between P700 and the cytochrome b6-f complex in photosystem I. In Capsella bursa-pastoris (Shepherd's purse), this protein is Plastocyanin (PETE).